The chain runs to 385 residues: Carbamoyl phosphate synthase small chain (385 aa).

A CPSase region spans residues 1-196; it reads MEDALGQLAV…KLEKKKKFLF (196 aa). L-glutamine contacts are provided by S51, G245, and G247. The 188-residue stretch at 197 to 384 folds into the Glutamine amidotransferase type-1 domain; the sequence is HIVVYDFGVK…IKLLNQVKFS (188 aa). C273 functions as the Nucleophile in the catalytic mechanism. Residues L274, Q277, N315, and F318 each coordinate L-glutamine. Active-site residues include H357 and E359.

This sequence belongs to the CarA family. In terms of assembly, composed of two chains; the small (or glutamine) chain promotes the hydrolysis of glutamine to ammonia, which is used by the large (or ammonia) chain to synthesize carbamoyl phosphate. Tetramer of heterodimers (alpha,beta)4.

It carries out the reaction hydrogencarbonate + L-glutamine + 2 ATP + H2O = carbamoyl phosphate + L-glutamate + 2 ADP + phosphate + 2 H(+). It catalyses the reaction L-glutamine + H2O = L-glutamate + NH4(+). The protein operates within amino-acid biosynthesis; L-arginine biosynthesis; carbamoyl phosphate from bicarbonate: step 1/1. It participates in pyrimidine metabolism; UMP biosynthesis via de novo pathway; (S)-dihydroorotate from bicarbonate: step 1/3. Small subunit of the glutamine-dependent carbamoyl phosphate synthetase (CPSase). CPSase catalyzes the formation of carbamoyl phosphate from the ammonia moiety of glutamine, carbonate, and phosphate donated by ATP, constituting the first step of 2 biosynthetic pathways, one leading to arginine and/or urea and the other to pyrimidine nucleotides. The small subunit (glutamine amidotransferase) binds and cleaves glutamine to supply the large subunit with the substrate ammonia. This Buchnera aphidicola subsp. Schizaphis graminum (strain Sg) protein is Carbamoyl phosphate synthase small chain.